Consider the following 62-residue polypeptide: Sperm protamine P1 (62 aa).

The tract at residues 1 to 62 is disordered; the sequence is MARYRHSXSR…RYSRRRRRRY (62 aa).

The protein belongs to the protamine P1 family. As to expression, testis.

Its subcellular location is the nucleus. It is found in the chromosome. In terms of biological role, protamines substitute for histones in the chromatin of sperm during the haploid phase of spermatogenesis. They compact sperm DNA into a highly condensed, stable and inactive complex. The polypeptide is Sperm protamine P1 (PRM1) (Petrogale xanthopus (Yellow-footed rock wallaby)).